Reading from the N-terminus, the 167-residue chain is CDP-archaeol synthase (167 aa).

A run of 5 helical transmembrane segments spans residues Ile-4 to Leu-24, Gly-51 to Pro-71, Phe-80 to Ile-100, Leu-104 to Ala-124, and Val-139 to Tyr-158.

The protein belongs to the CDP-archaeol synthase family. It depends on Mg(2+) as a cofactor.

The protein localises to the cell membrane. It catalyses the reaction 2,3-bis-O-(geranylgeranyl)-sn-glycerol 1-phosphate + CTP + H(+) = CDP-2,3-bis-O-(geranylgeranyl)-sn-glycerol + diphosphate. Its pathway is membrane lipid metabolism; glycerophospholipid metabolism. Its function is as follows. Catalyzes the formation of CDP-2,3-bis-(O-geranylgeranyl)-sn-glycerol (CDP-archaeol) from 2,3-bis-(O-geranylgeranyl)-sn-glycerol 1-phosphate (DGGGP) and CTP. This reaction is the third ether-bond-formation step in the biosynthesis of archaeal membrane lipids. This chain is CDP-archaeol synthase, found in Pyrococcus furiosus (strain ATCC 43587 / DSM 3638 / JCM 8422 / Vc1).